A 377-amino-acid chain; its full sequence is Rhodopsin, long-wavelength (377 aa).

At 1–51 (MIAVSGPSYEAFSYGGQARFNNQTVVDKVPPDMLHLIDANWYQYPPLNPMW) the chain is on the extracellular side. An N-linked (GlcNAc...) asparagine glycan is attached at Asn-22. A helical membrane pass occupies residues 52-76 (HGILGFVIGMLGFVSAMGNGMVVYI). At 77 to 88 (FLSTKSLRTPSN) the chain is on the cytoplasmic side. Residues 89–113 (LFVINLAISNFLMMFCMSPPMVINC) traverse the membrane as a helical segment. At 114-128 (YYETWVLGPLFCQIY) the chain is on the extracellular side. Cys-125 and Cys-202 are oxidised to a cystine. The helical transmembrane segment at 129–148 (AMLGSLFGCGSIWTMTMIAF) threads the bilayer. The Cytoplasmic portion of the chain corresponds to 149-167 (DRYNVIVKGLSGKPLSING). A helical transmembrane segment spans residues 168–191 (ALIRIIAIWLFSLGWTIAPMFGWN). Over 192-215 (RYVPEGNMTACGTDYFNRGLLSAS) the chain is Extracellular. Asn-198 is a glycosylation site (N-linked (GlcNAc...) asparagine). The chain crosses the membrane as a helical span at residues 216 to 243 (YLVCYGIWVYFVPLFLIIYSYWFIIQAV). At 244-278 (AAHEKNMREQAKKMNVASLRSSENQNTSAECKLAK) the chain is on the cytoplasmic side. Residues 279–302 (VALMTISLWFMAWTPYLVINFSGI) form a helical membrane-spanning segment. Residues 303–309 (FNLVKIS) lie on the Extracellular side of the membrane. A helical membrane pass occupies residues 310 to 334 (PLFTIWGSLFAKANAVYNPIVYGIS). Lys-321 is modified (N6-(retinylidene)lysine). Over 335 to 377 (HPKYRAALFAKFPSLACAAEPSSDAVSTTSGTTTVTDNEKSNA) the chain is Cytoplasmic. Positions 357–370 (SDAVSTTSGTTTVT) are enriched in low complexity. The disordered stretch occupies residues 357–377 (SDAVSTTSGTTTVTDNEKSNA).

It belongs to the G-protein coupled receptor 1 family. Opsin subfamily. In terms of processing, phosphorylated on some or all of the serine and threonine residues present in the C-terminal region.

Its subcellular location is the membrane. Functionally, visual pigments are the light-absorbing molecules that mediate vision. They consist of an apoprotein, opsin, covalently linked to 11-cis-retinal. This chain is Rhodopsin, long-wavelength, found in Apis mellifera (Honeybee).